A 148-amino-acid chain; its full sequence is Large ribosomal subunit protein uL15 (148 aa).

The tract at residues 14–54 is disordered; sequence HRKKRVGCGEGGGHGKTSGRGGKGQTARSGSSIRPGFEGGQ. The span at 21-37 shows a compositional bias: gly residues; it reads CGEGGGHGKTSGRGGKG.

It belongs to the universal ribosomal protein uL15 family. In terms of assembly, part of the 50S ribosomal subunit.

Binds to the 23S rRNA. The polypeptide is Large ribosomal subunit protein uL15 (Opitutus terrae (strain DSM 11246 / JCM 15787 / PB90-1)).